The primary structure comprises 235 residues: MDIKLKDFEGPLDLLLHLVSKYEVDIYDVPIVEVIEQYLAYIATLQAMRLEVAGEYMLMASQLMLIKSRNLLPKVVESTPIEDDPEMELLSQLEEYRRFKVLSEELANQHQERAKYFSKPKQEVIFEDAILLHDKSVMDLFLTFSQMMSQKQKELSNSQTVIEKEDYRIEDMMIVIERHFNLKKKTTLQEVFADCQTKSEMITLFLAMLELIKLHQITVEQDSNFSQVILRKEEK.

It belongs to the ScpA family. In terms of assembly, component of a cohesin-like complex composed of ScpA, ScpB and the Smc homodimer, in which ScpA and ScpB bind to the head domain of Smc. The presence of the three proteins is required for the association of the complex with DNA.

Its subcellular location is the cytoplasm. In terms of biological role, participates in chromosomal partition during cell division. May act via the formation of a condensin-like complex containing Smc and ScpB that pull DNA away from mid-cell into both cell halves. This Streptococcus agalactiae serotype III (strain NEM316) protein is Segregation and condensation protein A.